We begin with the raw amino-acid sequence, 252 residues long: Flagellar L-ring protein (252 aa).

A signal peptide spans 1–25 (MLKLASLNRIVLTGTLLAAAGLASG). The N-palmitoyl cysteine moiety is linked to residue Cys-26. Cys-26 carries S-diacylglycerol cysteine lipidation.

It belongs to the FlgH family. In terms of assembly, the basal body constitutes a major portion of the flagellar organelle and consists of four rings (L,P,S, and M) mounted on a central rod.

The protein resides in the cell outer membrane. It localises to the bacterial flagellum basal body. Its function is as follows. Assembles around the rod to form the L-ring and probably protects the motor/basal body from shearing forces during rotation. This chain is Flagellar L-ring protein, found in Nitrobacter winogradskyi (strain ATCC 25391 / DSM 10237 / CIP 104748 / NCIMB 11846 / Nb-255).